The following is a 281-amino-acid chain: Phosphatidylserine decarboxylase proenzyme (281 aa).

Active-site charge relay system; for autoendoproteolytic cleavage activity residues include D90, H143, and S248. S248 serves as the catalytic Schiff-base intermediate with substrate; via pyruvic acid; for decarboxylase activity. S248 carries the pyruvic acid (Ser); by autocatalysis modification.

This sequence belongs to the phosphatidylserine decarboxylase family. PSD-B subfamily. Prokaryotic type I sub-subfamily. Heterodimer of a large membrane-associated beta subunit and a small pyruvoyl-containing alpha subunit. Pyruvate serves as cofactor. Is synthesized initially as an inactive proenzyme. Formation of the active enzyme involves a self-maturation process in which the active site pyruvoyl group is generated from an internal serine residue via an autocatalytic post-translational modification. Two non-identical subunits are generated from the proenzyme in this reaction, and the pyruvate is formed at the N-terminus of the alpha chain, which is derived from the carboxyl end of the proenzyme. The autoendoproteolytic cleavage occurs by a canonical serine protease mechanism, in which the side chain hydroxyl group of the serine supplies its oxygen atom to form the C-terminus of the beta chain, while the remainder of the serine residue undergoes an oxidative deamination to produce ammonia and the pyruvoyl prosthetic group on the alpha chain. During this reaction, the Ser that is part of the protease active site of the proenzyme becomes the pyruvoyl prosthetic group, which constitutes an essential element of the active site of the mature decarboxylase.

It is found in the cell membrane. It carries out the reaction a 1,2-diacyl-sn-glycero-3-phospho-L-serine + H(+) = a 1,2-diacyl-sn-glycero-3-phosphoethanolamine + CO2. The protein operates within phospholipid metabolism; phosphatidylethanolamine biosynthesis; phosphatidylethanolamine from CDP-diacylglycerol: step 2/2. Catalyzes the formation of phosphatidylethanolamine (PtdEtn) from phosphatidylserine (PtdSer). The sequence is that of Phosphatidylserine decarboxylase proenzyme from Francisella philomiragia subsp. philomiragia (strain ATCC 25017 / CCUG 19701 / FSC 153 / O#319-036).